The primary structure comprises 84 residues: NAD(P)H-quinone oxidoreductase subunit O (84 aa).

It belongs to the complex I NdhO subunit family. NDH-1 can be composed of about 15 different subunits; different subcomplexes with different compositions have been identified which probably have different functions.

Its subcellular location is the cellular thylakoid membrane. The enzyme catalyses a plastoquinone + NADH + (n+1) H(+)(in) = a plastoquinol + NAD(+) + n H(+)(out). The catalysed reaction is a plastoquinone + NADPH + (n+1) H(+)(in) = a plastoquinol + NADP(+) + n H(+)(out). In terms of biological role, NDH-1 shuttles electrons from an unknown electron donor, via FMN and iron-sulfur (Fe-S) centers, to quinones in the respiratory and/or the photosynthetic chain. The immediate electron acceptor for the enzyme in this species is believed to be plastoquinone. Couples the redox reaction to proton translocation, and thus conserves the redox energy in a proton gradient. Cyanobacterial NDH-1 also plays a role in inorganic carbon-concentration. The protein is NAD(P)H-quinone oxidoreductase subunit O of Synechococcus sp. (strain CC9902).